Here is a 396-residue protein sequence, read N- to C-terminus: Coiled-coil domain-containing protein 1 (396 aa).

An N-terminal signal peptide occupies residues 1 to 21 (MAARSALCFLAIITLFVYACG). Coiled-coil stretches lie at residues 53 to 73 (KIDS…NDRD), 109 to 129 (EVEK…DIID), 208 to 242 (DKES…ILDT), and 287 to 308 (YEEI…IDEH). The span at 231 to 256 (DANDDVNDILDTDDEDEDEDVQEEKD) shows a compositional bias: acidic residues. 2 disordered regions span residues 231-260 (DAND…EDIH) and 288-378 (EEIE…VADD).

In terms of tissue distribution, component of the acid-insoluble and acid-soluble organic matrix of calcified layers of the shell (at protein level).

The protein resides in the secreted. The sequence is that of Coiled-coil domain-containing protein 1 from Lottia gigantea (Giant owl limpet).